A 695-amino-acid polypeptide reads, in one-letter code: Lasso peptide isopeptidase AtxE2 (695 aa).

A signal peptide spans 1–30; sequence MRSSKIRCPGAIRVGTLVTAFGCLPHVAFA. 2 disulfides stabilise this stretch: Cys296–Cys301 and Cys354–Cys363. Ser527 (nucleophile) is an active-site residue. Cysteines 551 and 552 form a disulfide. Catalysis depends on charge relay system residues Glu610 and His638.

Its subcellular location is the cytoplasm. Its function is as follows. Lasso peptide isopeptidase that specifically hydrolyzes Astexin-2 and Astexin-3, converting them to linear peptides. Has only a few specific contacts with substrates, because it recognizes Astexin knotted structure (principally the loop structure). Its binding to lasso peptides opens them to expose the isopeptide bonds for hydrolysis. This chain is Lasso peptide isopeptidase AtxE2, found in Asticcacaulis excentricus (strain ATCC 15261 / DSM 4724 / KCTC 12464 / NCIMB 9791 / VKM B-1370 / CB 48).